A 567-amino-acid chain; its full sequence is Lactase-like protein (567 aa).

The signal sequence occupies residues 1 to 21 (MKPVWVATLLWMLLLVPRLGA). Over 23–541 (RKGSPEEASF…LLSHMQMVTE (519 aa)) the chain is Extracellular. Asparagine 80, asparagine 171, and asparagine 245 each carry an N-linked (GlcNAc...) asparagine glycan. A helical membrane pass occupies residues 542–562 (IVVPTVCSLCVLITAVLLMLL). The Cytoplasmic segment spans residues 563 to 567 (LRRQS).

This sequence belongs to the glycosyl hydrolase 1 family. Klotho subfamily. In terms of assembly, may form dimers.

Its subcellular location is the endoplasmic reticulum membrane. In terms of biological role, plays a role in formation of the lens suture in the eye, which is important for normal optical properties of the lens. This Homo sapiens (Human) protein is Lactase-like protein (LCTL).